We begin with the raw amino-acid sequence, 342 residues long: Methylthioribose-1-phosphate isomerase (342 aa).

Substrate contacts are provided by residues 49–51 (RGA), Arg-86, and Gln-187. Asp-228 acts as the Proton donor in catalysis. Position 238 to 239 (238 to 239 (NK)) interacts with substrate.

Belongs to the eIF-2B alpha/beta/delta subunits family. MtnA subfamily.

It carries out the reaction 5-(methylsulfanyl)-alpha-D-ribose 1-phosphate = 5-(methylsulfanyl)-D-ribulose 1-phosphate. Its pathway is amino-acid biosynthesis; L-methionine biosynthesis via salvage pathway; L-methionine from S-methyl-5-thio-alpha-D-ribose 1-phosphate: step 1/6. Functionally, catalyzes the interconversion of methylthioribose-1-phosphate (MTR-1-P) into methylthioribulose-1-phosphate (MTRu-1-P). The chain is Methylthioribose-1-phosphate isomerase from Klebsiella pneumoniae (strain 342).